The following is a 264-amino-acid chain: Expansin-B3 (264 aa).

A signal peptide spans 1-25 (MQLFPVMLATLCIVLQLLIGSSALA). An Expansin-like EG45 domain is found at 54–162 (GGACGYGTLV…RRTACKYRGK (109 aa)). 3 disulfides stabilise this stretch: Cys-57–Cys-86, Cys-89–Cys-157, and Cys-94–Cys-100. Positions 175 to 256 (FWLSLLVEFE…NWAPKATYSS (82 aa)) constitute an Expansin-like CBD domain.

This sequence belongs to the expansin family. Expansin B subfamily.

The protein localises to the secreted. Its subcellular location is the cell wall. It is found in the membrane. Its function is as follows. May cause loosening and extension of plant cell walls by disrupting non-covalent bonding between cellulose microfibrils and matrix glucans. No enzymatic activity has been found. The polypeptide is Expansin-B3 (EXPB3) (Arabidopsis thaliana (Mouse-ear cress)).